The sequence spans 564 residues: Multidrug resistance protein 1 (564 aa).

At 1–115 (MHYRFLRDSF…NPQNWPTLQK (115 aa)) the chain is on the cytoplasmic side. Residues 60-101 (IDNQGEPNSSQSSSSNNTIVDNNNNNDNDVDGDKIVVTWDGD) are disordered. Positions 67–86 (NSSQSSSSNNTIVDNNNNND) are enriched in low complexity. A helical membrane pass occupies residues 116 to 136 (AFFIFQISFLTTSVYMGSAVY). Topologically, residues 137–151 (TPGIEELMHDFGIGR) are extracellular. Residues 152 to 172 (VVATLPLTLFVIGYGVGPLVF) traverse the membrane as a helical segment. Topologically, residues 173–183 (SPMSENAIFGR) are cytoplasmic. A helical membrane pass occupies residues 184-204 (TSIYIITLFLFVILQIPTALV). Over 205–206 (NN) the chain is Extracellular. Residues 207–227 (IAGLCILRFLGGFFASPCLAT) traverse the membrane as a helical segment. The Cytoplasmic portion of the chain corresponds to 228–242 (GGASVADVVKFWNLP). A helical membrane pass occupies residues 243-263 (VGLAAWSLGAVCGPSFGPFFG). The Extracellular segment spans residues 264 to 273 (SILTVKASWR). A helical transmembrane segment spans residues 274 to 294 (WTFWFMCIISGFSFVMLCFTL). Residues 295-350 (PETFGKTLLYRKAKRLRAITGNDRITSEGEVENSKMTSHELIIDTLWRPLEITVME) are Cytoplasmic-facing. A helical transmembrane segment spans residues 351-371 (PVVLLINIYIAMVYSILYLFF). Residues 372–390 (EVFPIYFVGVKHFTLVELG) are Extracellular-facing. A helical membrane pass occupies residues 391 to 411 (TTYMSIVIGIVIAAFIYIPVI). Topologically, residues 412-428 (RQKFTKPILRQEQVFPE) are cytoplasmic. A helical membrane pass occupies residues 429-449 (VFIPIAIVGGILLTSGLFIFG). The Extracellular segment spans residues 450–455 (WSANRT). N-linked (GlcNAc...) asparagine glycosylation occurs at N453. The chain crosses the membrane as a helical span at residues 456 to 476 (THWVGPLFGAATTASGAFLIF). Residues 477–503 (QTLFNFMGASFKPHYIASVFASNDLFR) lie on the Cytoplasmic side of the membrane. The helical transmembrane segment at 504–524 (SVIASVFPLFGAPLFDNLATP) threads the bilayer. Residues 525–528 (EYPV) lie on the Extracellular side of the membrane. Residues 529–549 (AWGSSVLGFITLVMIAIPVLF) form a helical membrane-spanning segment. Residues 550–564 (YLNGPKLRARSKYAN) are Cytoplasmic-facing.

This sequence belongs to the major facilitator superfamily. CAR1 family.

It localises to the cell membrane. In terms of biological role, plasma membrane multidrug efflux pump that confers resistance to numerous chemicals including azoles such as fluconazole, voriconazole, and benztriazoles, as well as to benomyl, cycloheximide, methotrexate, 4-nitroquinoline-N-oxide, sulfometuron methyl, cerulenin, and brefeldin A. This is Multidrug resistance protein 1 from Candida albicans (strain SC5314 / ATCC MYA-2876) (Yeast).